The following is a 198-amino-acid chain: 3-isopropylmalate dehydratase small subunit (198 aa).

This sequence belongs to the LeuD family. LeuD type 1 subfamily. Heterodimer of LeuC and LeuD.

It catalyses the reaction (2R,3S)-3-isopropylmalate = (2S)-2-isopropylmalate. It participates in amino-acid biosynthesis; L-leucine biosynthesis; L-leucine from 3-methyl-2-oxobutanoate: step 2/4. Catalyzes the isomerization between 2-isopropylmalate and 3-isopropylmalate, via the formation of 2-isopropylmaleate. The protein is 3-isopropylmalate dehydratase small subunit of Mycobacterium leprae (strain Br4923).